Reading from the N-terminus, the 329-residue chain is Serpentine receptor class alpha-4 (329 aa).

Helical transmembrane passes span 25–45 (IIVLIPVFITFIFTYYAIKVV), 103–123 (LYLEVFVSGVAGMVYGQTGLL), 144–164 (GLAISVSVLCLSFITSRLIIW), 188–208 (YFQSICTLLALFNLVTSILIW), 238–258 (ICFLTFVQFIFFLVYSLGFFI), and 273–293 (LVAVWLYTPPYIAASFPILIF).

Belongs to the nematode receptor-like protein sra family.

It is found in the membrane. This is Serpentine receptor class alpha-4 (sra-4) from Caenorhabditis elegans.